The sequence spans 261 residues: MSRKSLIAGNWKMNLNHFEAIALVQKIAFSLPDKYYDKVDVTVLPPFTDLRSVQTLVDGDKLRLTYGAQDLSQHDLGAYTGDISGAFLAKLGCSFVLVGHSERRTYHDEGDALVAAKTAAALKNSLTPIVCIGEYLEIREVGEHVSHCQNQLRGSLAGLSPEQIGNVVIVYEPVWAIGTGRVASAADAQEVCEAIRKELGALASPQVAETVRVLYGGSLNAKNIGDIVAQQDVDGGLVGGASLDGAQFATLAVIAAGGPLP.

10-12 (NWK) is a substrate binding site. Catalysis depends on His-100, which acts as the Electrophile. Catalysis depends on Glu-172, which acts as the Proton acceptor. Substrate-binding positions include Gly-178, Ser-218, and 239 to 240 (GG).

It belongs to the triosephosphate isomerase family. In terms of assembly, homodimer.

Its subcellular location is the cytoplasm. It catalyses the reaction D-glyceraldehyde 3-phosphate = dihydroxyacetone phosphate. It participates in carbohydrate biosynthesis; gluconeogenesis. The protein operates within carbohydrate degradation; glycolysis; D-glyceraldehyde 3-phosphate from glycerone phosphate: step 1/1. Functionally, involved in the gluconeogenesis. Catalyzes stereospecifically the conversion of dihydroxyacetone phosphate (DHAP) to D-glyceraldehyde-3-phosphate (G3P). The protein is Triosephosphate isomerase of Mycobacterium leprae (strain TN).